Reading from the N-terminus, the 89-residue chain is Small ribosomal subunit protein uS15 (89 aa).

Belongs to the universal ribosomal protein uS15 family. Part of the 30S ribosomal subunit. Forms a bridge to the 50S subunit in the 70S ribosome, contacting the 23S rRNA.

Its function is as follows. One of the primary rRNA binding proteins, it binds directly to 16S rRNA where it helps nucleate assembly of the platform of the 30S subunit by binding and bridging several RNA helices of the 16S rRNA. In terms of biological role, forms an intersubunit bridge (bridge B4) with the 23S rRNA of the 50S subunit in the ribosome. The polypeptide is Small ribosomal subunit protein uS15 (Actinobacillus pleuropneumoniae serotype 5b (strain L20)).